The primary structure comprises 367 residues: MKKQRIVVKIGSSSLADSHGGISTEQLSDHVAALARLKEEGHEVVLITSGAVAAGFSALGYPSRPVTIKGKQAAAAVGQSLLMQAYTEEFRKYGIVTAQLLLTRSDFSRKEQYSNAYATLGELLNRSALPIINENDSISLEELTFGDNDMLSALVSGLVSADMLMIFTDVNGLYDKNPQKNADAKKYYFLPEVTEEISSLAGDAGSKLGTGGMKSKIDAAKTALSLGVSVFIGTGRGQEKFVDVLKGKGDGTYVGNAPQKEMKMNKQWIALHSLVSGQIEVDAGAATAIIQHGKSLLPAGVTNVSGFFQVGEVVEVVTQQGRVIGKGQCTYSAEELRDVKGMQSQDIQVRGERHSYEVIHRDHWVSL.

Lysine 9 contributes to the ATP binding site. Substrate is bound by residues serine 49, aspartate 136, and asparagine 148. ATP-binding positions include 168-169 (TD) and 210-216 (TGGMKSK). In terms of domain architecture, PUA spans 276 to 350 (SGQIEVDAGA…GMQSQDIQVR (75 aa)).

This sequence belongs to the glutamate 5-kinase family.

It is found in the cytoplasm. It catalyses the reaction L-glutamate + ATP = L-glutamyl 5-phosphate + ADP. It participates in amino-acid biosynthesis; L-proline biosynthesis; L-glutamate 5-semialdehyde from L-glutamate: step 1/2. In terms of biological role, catalyzes the transfer of a phosphate group to glutamate to form L-glutamate 5-phosphate. The protein is Glutamate 5-kinase of Bacillus cereus (strain G9842).